Reading from the N-terminus, the 59-residue chain is Large ribosomal subunit protein uL30 (59 aa).

It belongs to the universal ribosomal protein uL30 family. Part of the 50S ribosomal subunit.

In Syntrophotalea carbinolica (strain DSM 2380 / NBRC 103641 / GraBd1) (Pelobacter carbinolicus), this protein is Large ribosomal subunit protein uL30.